Consider the following 465-residue polypeptide: Cysteine--tRNA ligase (465 aa).

Cysteine 27 is a binding site for Zn(2+). The 'HIGH' region signature appears at proline 29 to histidine 39. The Zn(2+) site is built by cysteine 207, histidine 237, and glutamate 241. Positions lysine 269–serine 273 match the 'KMSKS' region motif. Position 272 (lysine 272) interacts with ATP.

This sequence belongs to the class-I aminoacyl-tRNA synthetase family. As to quaternary structure, monomer. Requires Zn(2+) as cofactor.

It is found in the cytoplasm. The catalysed reaction is tRNA(Cys) + L-cysteine + ATP = L-cysteinyl-tRNA(Cys) + AMP + diphosphate. The chain is Cysteine--tRNA ligase from Helicobacter pylori (strain P12).